We begin with the raw amino-acid sequence, 391 residues long: 8-amino-7-oxononanoate synthase (391 aa).

Residue Arg19 participates in substrate binding. Residue 106–107 (GY) participates in pyridoxal 5'-phosphate binding. Residue His131 coordinates substrate. Pyridoxal 5'-phosphate contacts are provided by Ser178, His206, and Thr234. The residue at position 237 (Lys237) is an N6-(pyridoxal phosphate)lysine. Substrate is bound at residue Thr353.

This sequence belongs to the class-II pyridoxal-phosphate-dependent aminotransferase family. BioF subfamily. In terms of assembly, homodimer. The cofactor is pyridoxal 5'-phosphate.

The catalysed reaction is 6-carboxyhexanoyl-[ACP] + L-alanine + H(+) = (8S)-8-amino-7-oxononanoate + holo-[ACP] + CO2. It functions in the pathway cofactor biosynthesis; biotin biosynthesis. Catalyzes the decarboxylative condensation of pimeloyl-[acyl-carrier protein] and L-alanine to produce 8-amino-7-oxononanoate (AON), [acyl-carrier protein], and carbon dioxide. This chain is 8-amino-7-oxononanoate synthase, found in Geobacter metallireducens (strain ATCC 53774 / DSM 7210 / GS-15).